The primary structure comprises 388 residues: Succinate--CoA ligase [ADP-forming] subunit beta (388 aa).

Positions Lys9–Glu244 constitute an ATP-grasp domain. ATP is bound by residues Lys46, Gly53–Gly55, Glu99, Cys102, and Glu107. The Mg(2+) site is built by Asn199 and Asp213. Substrate-binding positions include Asn264 and Gly321–Met323.

This sequence belongs to the succinate/malate CoA ligase beta subunit family. In terms of assembly, heterotetramer of two alpha and two beta subunits. Mg(2+) serves as cofactor.

The enzyme catalyses succinate + ATP + CoA = succinyl-CoA + ADP + phosphate. The catalysed reaction is GTP + succinate + CoA = succinyl-CoA + GDP + phosphate. It participates in carbohydrate metabolism; tricarboxylic acid cycle; succinate from succinyl-CoA (ligase route): step 1/1. In terms of biological role, succinyl-CoA synthetase functions in the citric acid cycle (TCA), coupling the hydrolysis of succinyl-CoA to the synthesis of either ATP or GTP and thus represents the only step of substrate-level phosphorylation in the TCA. The beta subunit provides nucleotide specificity of the enzyme and binds the substrate succinate, while the binding sites for coenzyme A and phosphate are found in the alpha subunit. This is Succinate--CoA ligase [ADP-forming] subunit beta from Staphylococcus epidermidis (strain ATCC 35984 / DSM 28319 / BCRC 17069 / CCUG 31568 / BM 3577 / RP62A).